Reading from the N-terminus, the 542-residue chain is Chaperonin GroEL 2 (542 aa).

ATP-binding positions include 30–33, Lys51, 87–91, Gly415, and Asp496; these read TLGP and DGTTT.

Belongs to the chaperonin (HSP60) family. Forms a cylinder of 14 subunits composed of two heptameric rings stacked back-to-back. Interacts with the co-chaperonin GroES.

It is found in the cytoplasm. The catalysed reaction is ATP + H2O + a folded polypeptide = ADP + phosphate + an unfolded polypeptide.. Its function is as follows. Together with its co-chaperonin GroES, plays an essential role in assisting protein folding. The GroEL-GroES system forms a nano-cage that allows encapsulation of the non-native substrate proteins and provides a physical environment optimized to promote and accelerate protein folding. This Azorhizobium caulinodans (strain ATCC 43989 / DSM 5975 / JCM 20966 / LMG 6465 / NBRC 14845 / NCIMB 13405 / ORS 571) protein is Chaperonin GroEL 2.